We begin with the raw amino-acid sequence, 434 residues long: Adenylosuccinate synthetase (434 aa).

Residues 12–18 (GDEGKGK) and 40–42 (GHT) contribute to the GTP site. Residue Asp13 is the Proton acceptor of the active site. Mg(2+)-binding residues include Asp13 and Gly40. IMP contacts are provided by residues 13-16 (DEGK), 38-41 (NAGH), Thr129, Arg143, Gln224, Thr239, and Arg303. Catalysis depends on His41, which acts as the Proton donor. 299 to 305 (AVTGRPR) is a binding site for substrate. GTP-binding positions include Arg305, 331 to 333 (KLD), and 413 to 415 (STG).

Belongs to the adenylosuccinate synthetase family. In terms of assembly, homodimer. It depends on Mg(2+) as a cofactor.

The protein localises to the cytoplasm. It catalyses the reaction IMP + L-aspartate + GTP = N(6)-(1,2-dicarboxyethyl)-AMP + GDP + phosphate + 2 H(+). Its pathway is purine metabolism; AMP biosynthesis via de novo pathway; AMP from IMP: step 1/2. Its function is as follows. Plays an important role in the de novo pathway of purine nucleotide biosynthesis. Catalyzes the first committed step in the biosynthesis of AMP from IMP. This Solibacter usitatus (strain Ellin6076) protein is Adenylosuccinate synthetase.